We begin with the raw amino-acid sequence, 122 residues long: Large ribosomal subunit protein uL14 (122 aa).

It belongs to the universal ribosomal protein uL14 family. In terms of assembly, part of the 50S ribosomal subunit. Forms a cluster with proteins L3 and L19. In the 70S ribosome, L14 and L19 interact and together make contacts with the 16S rRNA in bridges B5 and B8.

Its function is as follows. Binds to 23S rRNA. Forms part of two intersubunit bridges in the 70S ribosome. In Streptococcus thermophilus (strain CNRZ 1066), this protein is Large ribosomal subunit protein uL14.